Reading from the N-terminus, the 698-residue chain is Elongation factor G (698 aa).

In terms of domain architecture, tr-type G spans 8–290; that stretch reads ERYRNIGIAA…AVIEFLPAPN (283 aa). GTP-binding positions include 17-24, 88-92, and 142-145; these read AHIDAGKT, DTPGH, and NKMD.

The protein belongs to the TRAFAC class translation factor GTPase superfamily. Classic translation factor GTPase family. EF-G/EF-2 subfamily.

Its subcellular location is the cytoplasm. Its function is as follows. Catalyzes the GTP-dependent ribosomal translocation step during translation elongation. During this step, the ribosome changes from the pre-translocational (PRE) to the post-translocational (POST) state as the newly formed A-site-bound peptidyl-tRNA and P-site-bound deacylated tRNA move to the P and E sites, respectively. Catalyzes the coordinated movement of the two tRNA molecules, the mRNA and conformational changes in the ribosome. The sequence is that of Elongation factor G from Halorhodospira halophila (strain DSM 244 / SL1) (Ectothiorhodospira halophila (strain DSM 244 / SL1)).